Consider the following 105-residue polypeptide: uncharacterized protein (105 aa).

This is an uncharacterized protein from Bacillus subtilis (strain 168).